A 154-amino-acid chain; its full sequence is 6,7-dimethyl-8-ribityllumazine synthase (154 aa).

5-amino-6-(D-ribitylamino)uracil contacts are provided by residues Phe22, 56–58 (AFE), and 80–82 (AVI). Residue 85–86 (AT) coordinates (2S)-2-hydroxy-3-oxobutyl phosphate. The Proton donor role is filled by His88. Residue Phe113 participates in 5-amino-6-(D-ribitylamino)uracil binding. Arg127 contacts (2S)-2-hydroxy-3-oxobutyl phosphate.

Belongs to the DMRL synthase family.

The catalysed reaction is (2S)-2-hydroxy-3-oxobutyl phosphate + 5-amino-6-(D-ribitylamino)uracil = 6,7-dimethyl-8-(1-D-ribityl)lumazine + phosphate + 2 H2O + H(+). Its pathway is cofactor biosynthesis; riboflavin biosynthesis; riboflavin from 2-hydroxy-3-oxobutyl phosphate and 5-amino-6-(D-ribitylamino)uracil: step 1/2. Functionally, catalyzes the formation of 6,7-dimethyl-8-ribityllumazine by condensation of 5-amino-6-(D-ribitylamino)uracil with 3,4-dihydroxy-2-butanone 4-phosphate. This is the penultimate step in the biosynthesis of riboflavin. The protein is 6,7-dimethyl-8-ribityllumazine synthase of Desulfitobacterium hafniense (strain DSM 10664 / DCB-2).